The chain runs to 113 residues: Hydrogenase maturation factor HypA (113 aa).

Residue H2 participates in Ni(2+) binding. The Zn(2+) site is built by C73, C76, C89, and C92.

It belongs to the HypA/HybF family.

Functionally, involved in the maturation of [NiFe] hydrogenases. Required for nickel insertion into the metal center of the hydrogenase. This is Hydrogenase maturation factor HypA from Acidithiobacillus ferrooxidans (strain ATCC 23270 / DSM 14882 / CIP 104768 / NCIMB 8455) (Ferrobacillus ferrooxidans (strain ATCC 23270)).